The primary structure comprises 354 residues: Kelch domain-containing protein 8B (354 aa).

Kelch repeat units lie at residues Met1 to Gly31, His32 to Lys79, Val81 to Gly127, Met128 to Asn175, Lys176 to Gly222, Val224 to Gly281, Asn282 to Pro329, and Leu331 to Val354.

The protein localises to the cytoplasm. The protein resides in the midbody. In terms of biological role, involved in pinching off the separated nuclei at the cleavage furrow and in cytokinesis. Required for mitotic integrity and maintenance of chromosomal stability. Protects cells against mitotic errors, centrosomal amplification, micronucleus formation and aneuploidy. Plays a key role of midbody function involving abscission of the daughter cells during cytokinesis and appropriate chromosomal and nuclear segregation into the daughter cells. This is Kelch domain-containing protein 8B (Klhdc8b) from Rattus norvegicus (Rat).